We begin with the raw amino-acid sequence, 112 residues long: MGLKEYKFGFESENIAVKFLKSHGYEILERNFHSRFGEIDIIAKKDEILHFIEVKATSKNYETAYRITSYKFSKILKTIKFYITKKQNETDFQVDFIGINKEKISFIENISL.

Belongs to the UPF0102 family.

This Campylobacter hominis (strain ATCC BAA-381 / DSM 21671 / CCUG 45161 / LMG 19568 / NCTC 13146 / CH001A) protein is UPF0102 protein CHAB381_0216.